A 546-amino-acid polypeptide reads, in one-letter code: Probable protein kinase UbiB (546 aa).

The Protein kinase domain maps to 124-502; it reads DFDIKPLASA…RVRQGQSRYL (379 aa). ATP-binding positions include 130 to 138 and Lys153; that span reads LASASIAQV. Catalysis depends on Asp288, which acts as the Proton acceptor. Transmembrane regions (helical) follow at residues 501–521 and 522–542; these read YLFG…INRP and DWQM…LIGW.

Belongs to the ABC1 family. UbiB subfamily.

The protein resides in the cell inner membrane. It functions in the pathway cofactor biosynthesis; ubiquinone biosynthesis [regulation]. Its function is as follows. Is probably a protein kinase regulator of UbiI activity which is involved in aerobic coenzyme Q (ubiquinone) biosynthesis. The sequence is that of Probable protein kinase UbiB from Enterobacter sp. (strain 638).